A 252-amino-acid chain; its full sequence is Ditrans,polycis-undecaprenyl-diphosphate synthase ((2E,6E)-farnesyl-diphosphate specific) (252 aa).

Residue aspartate 24 is part of the active site. Aspartate 24 is a binding site for Mg(2+). Residues glycine 25–arginine 28, tryptophan 29, arginine 37, histidine 41, and serine 69–glutamate 71 each bind substrate. Asparagine 72 (proton acceptor) is an active-site residue. Substrate contacts are provided by tryptophan 73, arginine 75, and arginine 192. Residue histidine 197 participates in Mg(2+) binding. Substrate is bound at residue arginine 198–serine 200. Residue glutamate 211 participates in Mg(2+) binding.

It belongs to the UPP synthase family. As to quaternary structure, homodimer. It depends on Mg(2+) as a cofactor.

It carries out the reaction 8 isopentenyl diphosphate + (2E,6E)-farnesyl diphosphate = di-trans,octa-cis-undecaprenyl diphosphate + 8 diphosphate. In terms of biological role, catalyzes the sequential condensation of isopentenyl diphosphate (IPP) with (2E,6E)-farnesyl diphosphate (E,E-FPP) to yield (2Z,6Z,10Z,14Z,18Z,22Z,26Z,30Z,34E,38E)-undecaprenyl diphosphate (di-trans,octa-cis-UPP). UPP is the precursor of glycosyl carrier lipid in the biosynthesis of bacterial cell wall polysaccharide components such as peptidoglycan and lipopolysaccharide. This is Ditrans,polycis-undecaprenyl-diphosphate synthase ((2E,6E)-farnesyl-diphosphate specific) from Yersinia pestis.